We begin with the raw amino-acid sequence, 193 residues long: Holliday junction branch migration complex subunit RuvA (193 aa).

Residues methionine 1–glycine 64 form a domain I region. The interval threonine 65 to proline 143 is domain II. Positions alanine 144–aspartate 151 are flexible linker. Residues aspartate 151–glycine 193 form a domain III region.

This sequence belongs to the RuvA family. In terms of assembly, homotetramer. Forms an RuvA(8)-RuvB(12)-Holliday junction (HJ) complex. HJ DNA is sandwiched between 2 RuvA tetramers; dsDNA enters through RuvA and exits via RuvB. An RuvB hexamer assembles on each DNA strand where it exits the tetramer. Each RuvB hexamer is contacted by two RuvA subunits (via domain III) on 2 adjacent RuvB subunits; this complex drives branch migration. In the full resolvosome a probable DNA-RuvA(4)-RuvB(12)-RuvC(2) complex forms which resolves the HJ.

The protein localises to the cytoplasm. In terms of biological role, the RuvA-RuvB-RuvC complex processes Holliday junction (HJ) DNA during genetic recombination and DNA repair, while the RuvA-RuvB complex plays an important role in the rescue of blocked DNA replication forks via replication fork reversal (RFR). RuvA specifically binds to HJ cruciform DNA, conferring on it an open structure. The RuvB hexamer acts as an ATP-dependent pump, pulling dsDNA into and through the RuvAB complex. HJ branch migration allows RuvC to scan DNA until it finds its consensus sequence, where it cleaves and resolves the cruciform DNA. This chain is Holliday junction branch migration complex subunit RuvA, found in Ralstonia nicotianae (strain ATCC BAA-1114 / GMI1000) (Ralstonia solanacearum).